A 690-amino-acid chain; its full sequence is Long-chain fatty acid transport protein 5 (690 aa).

Over M1 to A30 the chain is Cytoplasmic. 2 helical membrane-spanning segments follow: residues L31 to L51 and L56 to L76. Residues P77–L690 are Cytoplasmic-facing. F292 to K303 is an AMP binding site. At S501 the chain carries Phosphoserine.

Belongs to the ATP-dependent AMP-binding enzyme family. Predominantly expressed in liver.

The protein localises to the endoplasmic reticulum membrane. It is found in the microsome. Its subcellular location is the cell membrane. It catalyses the reaction a fatty acid(in) = a fatty acid(out). The catalysed reaction is cholate + ATP + CoA = choloyl-CoA + AMP + diphosphate. It carries out the reaction chenodeoxycholate + ATP + CoA = chenodeoxycholoyl-CoA + AMP + diphosphate. The enzyme catalyses deoxycholate + ATP + CoA = deoxycholoyl-CoA + AMP + diphosphate. It catalyses the reaction lithocholate + ATP + CoA = lithocholoyl-CoA + AMP + diphosphate. The catalysed reaction is (25R)-3alpha,7alpha,12alpha-trihydroxy-5beta-cholestan-26-oate + ATP + CoA = (25R)-3alpha,7alpha,12alpha-trihydroxy-5beta-cholestan-26-oyl-CoA + AMP + diphosphate. It carries out the reaction a very long-chain fatty acid + ATP + CoA = a very long-chain fatty acyl-CoA + AMP + diphosphate. The enzyme catalyses tetracosanoate + ATP + CoA = tetracosanoyl-CoA + AMP + diphosphate. It catalyses the reaction hexacosanoate + ATP + CoA = hexacosanoyl-CoA + AMP + diphosphate. The catalysed reaction is a long-chain fatty acid + ATP + CoA = a long-chain fatty acyl-CoA + AMP + diphosphate. It carries out the reaction octadecanoate + ATP + CoA = octadecanoyl-CoA + AMP + diphosphate. The enzyme catalyses eicosanoate + ATP + CoA = eicosanoyl-CoA + AMP + diphosphate. 3-alpha,7-alpha,12-alpha-trihydroxy-5-beta-cholestanate (THCA) inhibits the activation of cholate. May mediate the import of long-chain fatty acids (LCFA) by facilitating their transport across cell membranes. Also catalyzes the ATP-dependent formation of fatty acyl-CoA using LCFA and very-long-chain fatty acids (VLCFA) as substrates. Mainly functions as a bile acyl-CoA synthetase catalyzing the activation of bile acids via ATP-dependent formation of bile acid CoA thioesters which is necessary for their subsequent conjugation with glycine or taurine. Both primary bile acids (cholic acid and chenodeoxycholic acid) and secondary bile acids (deoxycholic acid and lithocholic acid) are the principal substrates. In vitro, activates 3-alpha,7-alpha,12-alpha-trihydroxy-5-beta-cholestanate ((25R)-3alpha,7alpha,12alpha-trihydroxy-5beta-cholestan-26-oate or THCA), the C27 precursor of cholic acid deriving from the de novo synthesis from cholesterol. Plays an important role in hepatic fatty acid uptake and bile acid reconjugation and recycling but not in de novo synthesis of bile acids. The sequence is that of Long-chain fatty acid transport protein 5 (SLC27A5) from Homo sapiens (Human).